Reading from the N-terminus, the 319-residue chain is Transcriptional regulator LsrR (319 aa).

Residues 32 to 55 (QSEISERLGLTRLKVSRLLEKGHQ) constitute a DNA-binding region (H-T-H motif).

Belongs to the SorC transcriptional regulatory family.

Its subcellular location is the cytoplasm. Its activity is regulated as follows. Inactivated by phosphorylated autoinducer-2 (phospho-AI-2). Phospho-AI-2 acts by binding to LsrR, which is then unable to bind to the promoter regions, allowing the transcription of the target genes. Transcriptional regulator that represses the expression of the lsr operon in the absence of the quorum-sensing signaling molecule autoinducer 2 (AI-2). It also represses the expression of the lsrRK operon. Acts by binding to the intergenic region between the lsr operon and lsrR. In the presence of phosphorylated autoinducer-2 (phospho-AI-2), LsrR is inactivated, leading to the transcription of the genes. This Salmonella choleraesuis (strain SC-B67) protein is Transcriptional regulator LsrR (lsrR).